Consider the following 188-residue polypeptide: Phosphoribosylglycinamide formyltransferase (188 aa).

12–14 (GSN) contacts N(1)-(5-phospho-beta-D-ribosyl)glycinamide. (6R)-10-formyltetrahydrofolate is bound by residues lysine 66, 91-94 (MRLI), and asparagine 108. Histidine 110 functions as the Proton donor in the catalytic mechanism.

It belongs to the GART family.

The enzyme catalyses N(1)-(5-phospho-beta-D-ribosyl)glycinamide + (6R)-10-formyltetrahydrofolate = N(2)-formyl-N(1)-(5-phospho-beta-D-ribosyl)glycinamide + (6S)-5,6,7,8-tetrahydrofolate + H(+). It participates in purine metabolism; IMP biosynthesis via de novo pathway; N(2)-formyl-N(1)-(5-phospho-D-ribosyl)glycinamide from N(1)-(5-phospho-D-ribosyl)glycinamide (10-formyl THF route): step 1/1. In terms of biological role, catalyzes the transfer of a formyl group from 10-formyltetrahydrofolate to 5-phospho-ribosyl-glycinamide (GAR), producing 5-phospho-ribosyl-N-formylglycinamide (FGAR) and tetrahydrofolate. This chain is Phosphoribosylglycinamide formyltransferase, found in Staphylococcus aureus (strain MSSA476).